A 189-amino-acid polypeptide reads, in one-letter code: Adenylate kinase (189 aa).

10–15 (GAGKGT) is an ATP binding site. Residues 30–59 (STGDIFRANVSGGTELGKKAQAYMDRGDLV) are NMP. AMP-binding positions include threonine 31, arginine 36, 57 to 59 (DLV), 85 to 88 (GFPR), and glutamine 92. The tract at residues 126 to 136 (ERARIDNRSDD) is LID. An ATP-binding site is contributed by arginine 127. AMP contacts are provided by arginine 133 and arginine 144. Glycine 172 is a binding site for ATP.

This sequence belongs to the adenylate kinase family. In terms of assembly, monomer.

It is found in the cytoplasm. The catalysed reaction is AMP + ATP = 2 ADP. It participates in purine metabolism; AMP biosynthesis via salvage pathway; AMP from ADP: step 1/1. Functionally, catalyzes the reversible transfer of the terminal phosphate group between ATP and AMP. Plays an important role in cellular energy homeostasis and in adenine nucleotide metabolism. This Thermobifida fusca (strain YX) protein is Adenylate kinase.